The following is a 276-amino-acid chain: NAD kinase (276 aa).

D61 functions as the Proton acceptor in the catalytic mechanism. Residues 61-62, 134-135, R145, K162, D164, V172, 175-180, and Q234 contribute to the NAD(+) site; these read DG, ND, and TAYSFS.

Belongs to the NAD kinase family. A divalent metal cation is required as a cofactor.

Its subcellular location is the cytoplasm. It carries out the reaction NAD(+) + ATP = ADP + NADP(+) + H(+). In terms of biological role, involved in the regulation of the intracellular balance of NAD and NADP, and is a key enzyme in the biosynthesis of NADP. Catalyzes specifically the phosphorylation on 2'-hydroxyl of the adenosine moiety of NAD to yield NADP. This chain is NAD kinase, found in Clostridium perfringens (strain ATCC 13124 / DSM 756 / JCM 1290 / NCIMB 6125 / NCTC 8237 / Type A).